A 592-amino-acid chain; its full sequence is Methylenetetrahydrofolate reductase (NADH) 1 (592 aa).

Catalysis depends on Glu-21, which acts as the Proton donor/acceptor. NAD(+)-binding positions include 21-26 and 52-53; these read EFFPPK and TW. FAD-binding positions include 52–53, His-81, 111–113, Tyr-153, 157–160, Asp-175, and Lys-182; these read TW, RGD, and HPDV. Asp-113 is a substrate binding site. Residues Gln-193 and Tyr-285 each contribute to the substrate site.

This sequence belongs to the methylenetetrahydrofolate reductase family. Homodimer. The cofactor is FAD.

It catalyses the reaction (6S)-5-methyl-5,6,7,8-tetrahydrofolate + NAD(+) = (6R)-5,10-methylene-5,6,7,8-tetrahydrofolate + NADH + H(+). It functions in the pathway one-carbon metabolism; tetrahydrofolate interconversion. Its activity is regulated as follows. Plant MTHFRs strongly prefer NADH over NADPH. Not inhibited by methionine or S-adenosylmethionine. The probable reversibility of the MTHFR reaction in plants suggests that they can metabolize the methyl group of 5,10-methylenetetrahydrofolate to serine, sugars and starch. In Arabidopsis thaliana (Mouse-ear cress), this protein is Methylenetetrahydrofolate reductase (NADH) 1 (MTHFR1).